The chain runs to 256 residues: MLIIPAIDIKDGKCVRLTRGDFSQQKIYLDNPLDMAIIWRKQNAKMLHIVDLDAALTGEMVNFERIRQIVEELDIPVQVGGGIRSADDVKRYLDMGVGRVVIGSAAVTNPELVRELMKTWRASKIVVGIDAVNGVPKIKGWTESANLKDFELAQRMKDMGIERIIYTDITRDGMLQGVGYETTRRFAELAGMKVTASGGVTNSEDLRRLAGLQYCGVDSVIIGKAFYECNFPCQELWYNFEEGICLDHNFSTARKR.

Asp-8 serves as the catalytic Proton acceptor. Catalysis depends on Asp-130, which acts as the Proton donor.

It belongs to the HisA/HisF family.

It localises to the cytoplasm. The catalysed reaction is 1-(5-phospho-beta-D-ribosyl)-5-[(5-phospho-beta-D-ribosylamino)methylideneamino]imidazole-4-carboxamide = 5-[(5-phospho-1-deoxy-D-ribulos-1-ylimino)methylamino]-1-(5-phospho-beta-D-ribosyl)imidazole-4-carboxamide. Its pathway is amino-acid biosynthesis; L-histidine biosynthesis; L-histidine from 5-phospho-alpha-D-ribose 1-diphosphate: step 4/9. The protein is 1-(5-phosphoribosyl)-5-[(5-phosphoribosylamino)methylideneamino] imidazole-4-carboxamide isomerase of Chlorobium luteolum (strain DSM 273 / BCRC 81028 / 2530) (Pelodictyon luteolum).